A 541-amino-acid polypeptide reads, in one-letter code: Chaperonin GroEL 2 (541 aa).

Residues 29 to 32 (TLGP), 86 to 90 (DGTTT), Gly413, 476 to 478 (NAA), and Asp492 each bind ATP.

This sequence belongs to the chaperonin (HSP60) family. In terms of assembly, forms a cylinder of 14 subunits composed of two heptameric rings stacked back-to-back. Interacts with the co-chaperonin GroES.

The protein resides in the secreted. The protein localises to the capsule. It is found in the cell surface. It localises to the cell wall. It carries out the reaction ATP + H2O + a folded polypeptide = ADP + phosphate + an unfolded polypeptide.. In terms of biological role, together with its co-chaperonin GroES, plays an essential role in assisting protein folding. The GroEL-GroES system forms a nano-cage that allows encapsulation of the non-native substrate proteins and provides a physical environment optimized to promote and accelerate protein folding. In Mycobacterium sp. (strain KMS), this protein is Chaperonin GroEL 2.